The chain runs to 317 residues: Melanocyte-stimulating hormone receptor (317 aa).

Over 1–37 (MAVQGFQRRLLGSLNSTPTAIPQLGLAANQTGARCLE) the chain is Extracellular. A glycan (N-linked (GlcNAc...) asparagine) is linked at N29. A helical membrane pass occupies residues 38–63 (VSIPDGLFLSLGLVSLVENVLVVATI). Over 64–72 (AKNRNLHSP) the chain is Cytoplasmic. The helical transmembrane segment at 73–93 (TYCFICCLALSDLLVSGGNVL) threads the bilayer. Over 94–118 (ETVVILLLEASALAARAAVVQPLDN) the chain is Extracellular. The helical transmembrane segment at 119 to 140 (VIDVITCSSMVSSLCFLGAIAM) threads the bilayer. Residues 141–163 (DRYVSIFYALRYHSIVTLPRARQ) are Cytoplasmic-facing. A helical membrane pass occupies residues 164–183 (AIAAIWVASVLFSTLFIAYY). Topologically, residues 184 to 191 (DHAAVLLC) are extracellular. A helical transmembrane segment spans residues 192 to 211 (LVVFFLAMLVLMAVLYVHML). Topologically, residues 212 to 240 (ARACQHAQGIARLHKRQRPLHQGFGLKGA) are cytoplasmic. A helical transmembrane segment spans residues 241 to 266 (VTLTILLGIFFLCWGPFFLHLTLIVL). Residues 267-279 (CPQHPTCSCIFKN) lie on the Extracellular side of the membrane. A helical membrane pass occupies residues 280–300 (FNLFLTLIICNAIIDPLIYAF). Residues 301 to 317 (RRQELRRTLKEGLTCSW) lie on the Cytoplasmic side of the membrane. C315 is lipidated: S-palmitoyl cysteine.

It belongs to the G-protein coupled receptor 1 family. In terms of assembly, interacts with MGRN1, but does not undergo MGRN1-mediated ubiquitination; this interaction competes with GNAS-binding and thus inhibits agonist-induced cAMP production. Interacts with OPN3; the interaction results in a decrease in MC1R-mediated cAMP signaling and ultimately a decrease in melanin production in melanocytes.

Its subcellular location is the cell membrane. Its function is as follows. Receptor for MSH (alpha, beta and gamma) and ACTH. The activity of this receptor is mediated by G proteins which activate adenylate cyclase. Mediates melanogenesis, the production of eumelanin (black/brown) and phaeomelanin (red/yellow), via regulation of cAMP signaling in melanocytes. The protein is Melanocyte-stimulating hormone receptor (MC1R) of Hylobates lar (Lar gibbon).